The following is a 442-amino-acid chain: Putative nucleotide-sugar transporter YMD8 (442 aa).

Residues 1-3 (MNR) are Cytoplasmic-facing. The helical transmembrane segment at 4–24 (TVFLAFVFGWYFCSIALSIYN) threads the bilayer. At 25–32 (RWMFDPKD) the chain is on the extracellular side. Residues 33–53 (GLGIGYPVLVTTFHQATLWLL) traverse the membrane as a helical segment. Residues 54-76 (SGIYIKLRHKPVKNVLRKNNGFN) lie on the Cytoplasmic side of the membrane. Residues 77-97 (WSFFLKFLLPTAVASAGDIGL) form a helical membrane-spanning segment. Over 98–107 (SNVSFQYVPL) the chain is Extracellular. N-linked (GlcNAc...) asparagine glycosylation occurs at N99. A helical membrane pass occupies residues 108 to 128 (TIYTIIKSSSIAFVLLFGCIF). Residues 129–132 (KLEK) are Cytoplasmic-facing. The chain crosses the membrane as a helical span at residues 133–153 (FHWKLALSVIIMFVGVALMVF). The Extracellular portion of the chain corresponds to 154-166 (KPSDSTSTKNDQA). A helical membrane pass occupies residues 167–187 (LVIFGSFLVLASSCLSGLRWV). The Cytoplasmic portion of the chain corresponds to 188-254 (YTQLMLRNNP…PIHTIHQLAP (67 aa)). S209 is modified (phosphoserine). The helical transmembrane segment at 255–275 (IMGITLLLTSLLVEKPFPGIF) threads the bilayer. The Extracellular segment spans residues 276–301 (SSSIFRLDTSNGGVGTETTVLSIVRG). The chain crosses the membrane as a helical span at residues 302-322 (IVLLILPGFAVFLLTICEFSI). The Cytoplasmic segment spans residues 323–329 (LEQTPVL). Residues 330–350 (TVSIVGIVKELLTVIFGIIIL) form a helical membrane-spanning segment. Topologically, residues 351–355 (SERLS) are extracellular. A helical membrane pass occupies residues 356 to 376 (GFYNWLGMLIIMADVCYYNYF). The Cytoplasmic segment spans residues 377–442 (RYKQDLLQKY…QNVSRSSQQV (66 aa)).

Belongs to the TPT transporter family. SLC35C subfamily.

The protein localises to the golgi apparatus membrane. Its subcellular location is the cytoplasmic vesicle. The protein resides in the COPI-coated vesicle membrane. The sequence is that of Putative nucleotide-sugar transporter YMD8 (YMD8) from Saccharomyces cerevisiae (strain ATCC 204508 / S288c) (Baker's yeast).